We begin with the raw amino-acid sequence, 552 residues long: Carotenoid cleavage dioxygenase 8 homolog A, chloroplastic (552 aa).

The transit peptide at 1–43 directs the protein to the chloroplast; it reads MATSLTLIATPCTAPRSSSSFALAPRLPPRCSNATAARRRAVR. The segment at 32–73 is disordered; the sequence is SNATAARRRAVRATTLQSDQEPAGSGDSGATTTKLSASTSVR. Over residues 59–72 the composition is skewed to polar residues; it reads SGATTTKLSASTSV. Residues histidine 239, histidine 289, histidine 356, and histidine 543 each contribute to the Fe cation site.

This sequence belongs to the carotenoid oxygenase family. It depends on Fe(2+) as a cofactor. In terms of tissue distribution, highly expressed in panicles, inflorescences and parenchyma cells of the root stele, and at lower levels in shoot apex, leaf buds and xylem parenchyma cells of the stem.

Its subcellular location is the plastid. It is found in the chloroplast. Its function is as follows. May be involved in strigolactones biosynthesis. This is Carotenoid cleavage dioxygenase 8 homolog A, chloroplastic (CCD8A) from Oryza sativa subsp. japonica (Rice).